Here is a 155-residue protein sequence, read N- to C-terminus: Small ribosomal subunit protein uS7 (155 aa).

The protein belongs to the universal ribosomal protein uS7 family. Part of the 30S ribosomal subunit. Contacts proteins S9 and S11.

Its function is as follows. One of the primary rRNA binding proteins, it binds directly to 16S rRNA where it nucleates assembly of the head domain of the 30S subunit. Is located at the subunit interface close to the decoding center, probably blocks exit of the E-site tRNA. This Helicobacter hepaticus (strain ATCC 51449 / 3B1) protein is Small ribosomal subunit protein uS7.